The following is a 274-amino-acid chain: Exosome complex component Rrp42 (274 aa).

Belongs to the RNase PH family. Rrp42 subfamily. In terms of assembly, component of the archaeal exosome complex. Forms a hexameric ring-like arrangement composed of 3 Rrp41-Rrp42 heterodimers. The hexameric ring associates with a trimer of Rrp4 and/or Csl4 subunits.

The protein resides in the cytoplasm. Non-catalytic component of the exosome, which is a complex involved in RNA degradation. Contributes to the structuring of the Rrp41 active site. In Pyrococcus abyssi (strain GE5 / Orsay), this protein is Exosome complex component Rrp42.